An 87-amino-acid polypeptide reads, in one-letter code: Large ribosomal subunit protein bL27 (87 aa).

Residues 1–20 form a disordered region; that stretch reads MARKRGGSGSKNGRDSNPKY.

The protein belongs to the bacterial ribosomal protein bL27 family.

This is Large ribosomal subunit protein bL27 (rpmA) from Treponema pallidum (strain Nichols).